Here is a 395-residue protein sequence, read N- to C-terminus: Chalcone synthase 7 (395 aa).

The active site involves Cys169.

The protein belongs to the thiolase-like superfamily. Chalcone/stilbene synthases family.

The catalysed reaction is (E)-4-coumaroyl-CoA + 3 malonyl-CoA + 3 H(+) = 2',4,4',6'-tetrahydroxychalcone + 3 CO2 + 4 CoA. Its pathway is secondary metabolite biosynthesis; flavonoid biosynthesis. Functionally, the primary product of this enzyme is 4,2',4',6'-tetrahydroxychalcone (also termed naringenin-chalcone or chalcone) which can under specific conditions spontaneously isomerize into naringenin. The chain is Chalcone synthase 7 (CSF7) from Picea mariana (Black spruce).